Reading from the N-terminus, the 331-residue chain is Betaine-homocysteine S-methyltransferase (331 aa).

In terms of domain architecture, Hcy-binding spans 3–324 (VNQKWNWDTK…TDVLAIRKYV (322 aa)). Residues cysteine 243, cysteine 309, and cysteine 310 each coordinate Zn(2+).

Belongs to the Betaine-homocysteine S-methyltransferase, BHMT family. Requires Zn(2+) as cofactor.

It catalyses the reaction L-homocysteine + glycine betaine = N,N-dimethylglycine + L-methionine. It functions in the pathway amino-acid biosynthesis; L-methionine biosynthesis via de novo pathway. Involved in the regulation of homocysteine metabolism. Converts betaine and homocysteine to dimethylglycine and methionine, respectively. This chain is Betaine-homocysteine S-methyltransferase, found in Drosophila melanogaster (Fruit fly).